We begin with the raw amino-acid sequence, 89 residues long: Putative membrane protein insertion efficiency factor (89 aa).

This sequence belongs to the UPF0161 family.

The protein resides in the cell membrane. Its function is as follows. Could be involved in insertion of integral membrane proteins into the membrane. The chain is Putative membrane protein insertion efficiency factor from Exiguobacterium sp. (strain ATCC BAA-1283 / AT1b).